The primary structure comprises 269 residues: MTNLIRSNFQDHPFHLVSPSPWPLNTSVCLLNLTTTGALSMHNFNNIHYLYYIALIGLVSAMFLWFRDIISEGTFLGDHTLAVQRGLNLGIILFIVSEALFFLAIFWAFFHSALTPTVELGAQWPPIGIEPVNPFELPLLNTVILLSSGATITYAHHALIKGEREGALYGSIATILLAIIFTGFQGVEYSVSSFTISDGAFGTCFFFSTGFHGIHVIIGTIFLAVALWRIFAYHLTDNHHVGFEGGILYWHFVDVVWLFLYISVYYWGS.

The Mitochondrial matrix segment spans residues 1 to 22; the sequence is MTNLIRSNFQDHPFHLVSPSPW. Residues 23-41 form a helical membrane-spanning segment; the sequence is PLNTSVCLLNLTTTGALSM. The Mitochondrial intermembrane portion of the chain corresponds to 42–48; it reads HNFNNIH. Residues 49-73 traverse the membrane as a helical segment; the sequence is YLYYIALIGLVSAMFLWFRDIISEG. The Mitochondrial matrix segment spans residues 74-80; the sequence is TFLGDHT. The chain crosses the membrane as a helical span at residues 81 to 114; the sequence is LAVQRGLNLGIILFIVSEALFFLAIFWAFFHSAL. The Mitochondrial intermembrane portion of the chain corresponds to 115–137; that stretch reads TPTVELGAQWPPIGIEPVNPFEL. Residues 138–161 traverse the membrane as a helical segment; sequence PLLNTVILLSSGATITYAHHALIK. Over 162-164 the chain is Mitochondrial matrix; the sequence is GER. The chain crosses the membrane as a helical span at residues 165 to 188; that stretch reads EGALYGSIATILLAIIFTGFQGVE. Over 189 to 201 the chain is Mitochondrial intermembrane; sequence YSVSSFTISDGAF. Residues 202–230 form a helical membrane-spanning segment; it reads GTCFFFSTGFHGIHVIIGTIFLAVALWRI. The Mitochondrial matrix segment spans residues 231–248; the sequence is FAYHLTDNHHVGFEGGIL. The helical transmembrane segment at 249-265 threads the bilayer; that stretch reads YWHFVDVVWLFLYISVY. Topologically, residues 266–269 are mitochondrial intermembrane; the sequence is YWGS.

This sequence belongs to the cytochrome c oxidase subunit 3 family. In terms of assembly, component of the cytochrome c oxidase (complex IV, CIV), a multisubunit enzyme composed of 11 subunits. The complex is composed of a catalytic core of 3 subunits Cox1, Cox2 and Cox3, encoded in the mitochondrial DNA, and 8 supernumerary subunits Cox4, Cox5a/Cox5, Cox6, Cox7, Cox8, Cox7a/Cox9, Cox6b/Cox12 and Cox6a/Cox13, which are encoded in the nuclear genome. The complex exists as a monomer or a dimer and forms respiratory supercomplexes (SCs) in the inner mitochondrial membrane with NADH-ubiquinone oxidoreductase (complex I, CI) and ubiquinol-cytochrome c oxidoreductase (cytochrome b-c1 complex, complex III, CIII), resulting in various different assemblies (supercomplexes I(1)IV(1), I(1)III(3)IV(2), III(2)IV(1) and III(2)IV(2) as well as larger supercomplexes of compositions like I(1)III(2)IV(5-6)).

It localises to the mitochondrion inner membrane. It catalyses the reaction 4 Fe(II)-[cytochrome c] + O2 + 8 H(+)(in) = 4 Fe(III)-[cytochrome c] + 2 H2O + 4 H(+)(out). Component of the cytochrome c oxidase, the last enzyme in the mitochondrial electron transport chain which drives oxidative phosphorylation. The respiratory chain contains 3 multisubunit complexes succinate dehydrogenase (complex II, CII), ubiquinol-cytochrome c oxidoreductase (cytochrome b-c1 complex, complex III, CIII) and cytochrome c oxidase (complex IV, CIV), that cooperate to transfer electrons derived from NADH and succinate to molecular oxygen, creating an electrochemical gradient over the inner membrane that drives transmembrane transport and the ATP synthase. Cytochrome c oxidase is the component of the respiratory chain that catalyzes the reduction of oxygen to water. Electrons originating from reduced cytochrome c in the intermembrane space (IMS) are transferred via the dinuclear copper A center (CU(A)) of Cox2 and heme A of Cox1 to the active site in Cox1, a binuclear center (BNC) formed by heme A3 and copper B (CU(B)). The BNC reduces molecular oxygen to 2 water molecules using 4 electrons from cytochrome c in the IMS and 4 protons from the mitochondrial matrix. This chain is Cytochrome c oxidase subunit 3 (cox-3), found in Neurospora crassa (strain ATCC 24698 / 74-OR23-1A / CBS 708.71 / DSM 1257 / FGSC 987).